A 111-amino-acid polypeptide reads, in one-letter code: uncharacterized protein (111 aa).

In terms of assembly, homodimer, or homotetramer.

This is an uncharacterized protein from Bacillus subtilis (strain 168).